The following is a 493-amino-acid chain: Probable cytosol aminopeptidase (493 aa).

Lysine 262 and aspartate 267 together coordinate Mn(2+). Lysine 274 is an active-site residue. Positions 285, 344, and 346 each coordinate Mn(2+). The active site involves arginine 348.

This sequence belongs to the peptidase M17 family. The cofactor is Mn(2+).

It is found in the cytoplasm. It carries out the reaction Release of an N-terminal amino acid, Xaa-|-Yaa-, in which Xaa is preferably Leu, but may be other amino acids including Pro although not Arg or Lys, and Yaa may be Pro. Amino acid amides and methyl esters are also readily hydrolyzed, but rates on arylamides are exceedingly low.. The enzyme catalyses Release of an N-terminal amino acid, preferentially leucine, but not glutamic or aspartic acids.. Functionally, presumably involved in the processing and regular turnover of intracellular proteins. Catalyzes the removal of unsubstituted N-terminal amino acids from various peptides. The polypeptide is Probable cytosol aminopeptidase (Xanthomonas campestris pv. campestris (strain 8004)).